The following is a 691-amino-acid chain: Elongation factor G (691 aa).

Positions 8–283 constitute a tr-type G domain; sequence EDYRNFGIMA…AVVDYLPSPA (276 aa). GTP contacts are provided by residues 17 to 24, 81 to 85, and 135 to 138; these read AHIDAGKT, DTPGH, and NKMD.

This sequence belongs to the TRAFAC class translation factor GTPase superfamily. Classic translation factor GTPase family. EF-G/EF-2 subfamily.

The protein resides in the cytoplasm. Its function is as follows. Catalyzes the GTP-dependent ribosomal translocation step during translation elongation. During this step, the ribosome changes from the pre-translocational (PRE) to the post-translocational (POST) state as the newly formed A-site-bound peptidyl-tRNA and P-site-bound deacylated tRNA move to the P and E sites, respectively. Catalyzes the coordinated movement of the two tRNA molecules, the mRNA and conformational changes in the ribosome. This chain is Elongation factor G, found in Methylobacterium sp. (strain 4-46).